The chain runs to 555 residues: ATP-dependent RNA helicase MRH4, mitochondrial (555 aa).

A mitochondrion-targeting transit peptide spans 1 to 25 (MFKLLIPNKYNYVIRPLVRFKSIKS). Positions 101 to 108 (DIKPTPVQ) match the Q motif motif. Residues 144–361 (ANEIQKTKVF…SKLFPDQRSL (218 aa)) form the Helicase ATP-binding domain. 157-164 (AETGSGKT) lines the ATP pocket. Positions 309–312 (DEAD) match the DEAD box motif. A Helicase C-terminal domain is found at 395–555 (CLAQALYAIS…NAIIRGLRIG (161 aa)).

The protein belongs to the DEAD box helicase family. MRH4 subfamily.

The protein resides in the mitochondrion. It carries out the reaction ATP + H2O = ADP + phosphate + H(+). Its function is as follows. ATP-binding RNA helicase involved in mitochondrial RNA metabolism. Required for maintenance of mitochondrial DNA. In Candida albicans (strain SC5314 / ATCC MYA-2876) (Yeast), this protein is ATP-dependent RNA helicase MRH4, mitochondrial (MRH4).